The sequence spans 250 residues: Putative apoptosis inhibitor ORF99 (250 aa).

A BIR repeat occupies 13–78; the sequence is RVNSFGGWSK…KFSGDCLYLK (66 aa).

May act as an apoptosis inhibitor. The chain is Putative apoptosis inhibitor ORF99 from Ostreid herpesvirus 1 (isolate France) (OsHV-1).